We begin with the raw amino-acid sequence, 237 residues long: Demethylmenaquinone methyltransferase (237 aa).

Residues threonine 58, aspartate 79, and 106-107 each bind S-adenosyl-L-methionine; that span reads NA.

It belongs to the class I-like SAM-binding methyltransferase superfamily. MenG/UbiE family.

The enzyme catalyses a 2-demethylmenaquinol + S-adenosyl-L-methionine = a menaquinol + S-adenosyl-L-homocysteine + H(+). It functions in the pathway quinol/quinone metabolism; menaquinone biosynthesis; menaquinol from 1,4-dihydroxy-2-naphthoate: step 2/2. Functionally, methyltransferase required for the conversion of demethylmenaquinol (DMKH2) to menaquinol (MKH2). The protein is Demethylmenaquinone methyltransferase of Bacillus cytotoxicus (strain DSM 22905 / CIP 110041 / 391-98 / NVH 391-98).